A 126-amino-acid chain; its full sequence is Large ribosomal subunit protein bL20c (126 aa).

This sequence belongs to the bacterial ribosomal protein bL20 family.

It localises to the plastid. The protein localises to the chloroplast. Binds directly to 23S ribosomal RNA and is necessary for the in vitro assembly process of the 50S ribosomal subunit. It is not involved in the protein synthesizing functions of that subunit. The sequence is that of Large ribosomal subunit protein bL20c from Guizotia abyssinica (Niger).